The following is a 266-amino-acid chain: Hydroxypyruvate/pyruvate aldolase (266 aa).

Residue H48 is the Proton acceptor of the active site. A divalent metal cation-binding residues include E152 and D178.

It belongs to the HpcH/HpaI aldolase family. A divalent metal cation serves as cofactor.

It catalyses the reaction D-glyceraldehyde + pyruvate = 2-dehydro-3-deoxy-L-galactonate. The catalysed reaction is 2-dehydro-3-deoxy-D-gluconate = D-glyceraldehyde + pyruvate. Functionally, aldolase which can catalyze in vitro the aldolisation reaction between hydroxypyruvate (HPA) or pyruvate (PA) and D-glyceraldehyde (D-GA). The condensation of pyruvate and D-glyceraldehyde produces 2-dehydro-3-deoxy-L-galactonate as the major product and 2-dehydro-3-deoxy-D-gluconate. Has weak activity with hydroxypyruvate and D-glyceraldehyde. This chain is Hydroxypyruvate/pyruvate aldolase, found in Agrobacterium fabrum (strain C58 / ATCC 33970) (Agrobacterium tumefaciens (strain C58)).